The primary structure comprises 944 residues: MAGPQESSTSSGSRKSGSRAVGQFNIGSEIGKGSFAQVYLGWHKETKAAVAIKSVELERLNKKLRENLYSEIQILKTLRHPHIVALHDCIESTSHINLIMEYCELGDLSLFIKKREKLATHPATHDMARKYPSMPNSGLHEVVIRHFLKQLTSALEFLRSKNYVHRDVKPQNLLLLPSQPFRDQRSRPVMQASQDSLIPISGLASLPMLKLADFGFARVLPSTSLADTLCGSPLYMAPEILRYERYDAKADLWSVGTVLYEMSTGRPPFRARNHVELLRKIEAAEDVIKFPREVSITPELKALIRSLLKRSPVERLSFENFFTHQVVTSEIPGLVEDDIPKSLRQESRDPRSAFQSGSPSLSSRSPRQTGHQSPTEALVSRSPRDQQPRSPQVGSPGGSRYARRSNESQRTTGNSPREGGEGLGIRRPVAQHAMTAPVQQVAYDSVTGRNRASPPTSLLDQVRRNRALSNPPITEEERAAQDVALEREYVVVERRHVEVNALADELAANEKLGDASQRSGPITRRYTQQGAPTSTTGAISTPYSRNALATQPRHDRKSSYEKSLSASPGSASSAISKAIQDASLRLFGFKVPPLRASPKGPSPPLYQAFPTYPTPQAPVGLLGDGRNVQGTDEDGKAAQTIEELATRSDCVYGFAEVKYKQLVPLAPSADHILGGLEPEQLVNEEDGLTVEAIVALSEEALVLYVKSLTLLARAMDIASLWWSKKSRGDTGTGLSAAAAQTVVQRINAVVQWVRQRFNEVLEKSEIVRLKLTEAQKQLPDDHPSHPSNHGTESIASSAGSPTKQVYLTPGISAEKLMYDRALEMSRAAAIDEVTNENLSGCEISYITAIRMLEAVLDNDEGSGSETRRLSTGKEAEREAVKEVSGGELDSDEEAHVRKRRLAAVRKKQQMIAEANSKTNLVYQQAVRRRSGDMTPRSVPSHASS.

In terms of domain architecture, Protein kinase spans 24 to 327 (FNIGSEIGKG…FENFFTHQVV (304 aa)). ATP-binding positions include 30–38 (IGKGSFAQV) and K53. D167 (proton acceptor) is an active-site residue. Positions 344-423 (RQESRDPRSA…NSPREGGEGL (80 aa)) are disordered. The segment covering 356–367 (SGSPSLSSRSPR) has biased composition (low complexity). The LIR motif lies at 428 to 431 (PVAQ). Disordered regions lie at residues 443-475 (YDSV…PITE), 512-572 (LGDA…GSAS), 777-801 (QLPD…AGSP), 860-895 (EGSG…EEAH), and 925-944 (AVRR…HASS). Polar residues-rich tracts occupy residues 447–459 (TGRN…TSLL) and 516–549 (SQRS…NALA). Low complexity predominate over residues 563 to 572 (SLSASPGSAS). A compositionally biased stretch (polar residues) spans 785 to 801 (HPSNHGTESIASSAGSP). Basic and acidic residues predominate over residues 865-881 (ETRRLSTGKEAEREAVK). A required for Cvt trafficking region spans residues 924–930 (QAVRRRS).

It belongs to the protein kinase superfamily. Ser/Thr protein kinase family. APG1/unc-51/ULK1 subfamily. In terms of assembly, homodimer. Dimerization requires the presence of ATG13. Forms a ternary complex with ATG13 and ATG17.

The protein resides in the cytoplasm. It localises to the preautophagosomal structure membrane. The enzyme catalyses L-seryl-[protein] + ATP = O-phospho-L-seryl-[protein] + ADP + H(+). The catalysed reaction is L-threonyl-[protein] + ATP = O-phospho-L-threonyl-[protein] + ADP + H(+). Functionally, serine/threonine protein kinase involved in the cytoplasm to vacuole transport (Cvt) and found to be essential in autophagy, where it is required for the formation of autophagosomes. Involved in the clearance of protein aggregates which cannot be efficiently cleared by the proteasome. Required for selective autophagic degradation of the nucleus (nucleophagy) as well as for mitophagy which contributes to regulate mitochondrial quantity and quality by eliminating the mitochondria to a basal level to fulfill cellular energy requirements and preventing excess ROS production. Also involved in endoplasmic reticulum-specific autophagic process, in selective removal of ER-associated degradation (ERAD) substrates. Plays a key role in ATG9 and ATG23 cycling through the pre-autophagosomal structure and is necessary to promote ATG18 binding to ATG9 through phosphorylation of ATG9. Catalyzes phosphorylation of ATG4, decreasing the interaction between ATG4 and ATG8 and impairing deconjugation of PE-conjugated forms of ATG8. Autophagy is required for proper vegetative growth, asexual/sexual reproduction, and full virulence. Autophagy is particularly involved in the biosynthesis of deoxynivalenol (DON), an important virulence determinant. The chain is Serine/threonine-protein kinase ATG1 from Gibberella zeae (strain ATCC MYA-4620 / CBS 123657 / FGSC 9075 / NRRL 31084 / PH-1) (Wheat head blight fungus).